The sequence spans 252 residues: Type III pantothenate kinase (252 aa).

6–13 (DIGNTTTE) serves as a coordination point for ATP. Substrate is bound by residues tyrosine 100 and 107 to 110 (GADR). Aspartate 109 acts as the Proton acceptor in catalysis. Residue aspartate 129 participates in K(+) binding. Position 132 (threonine 132) interacts with ATP. Threonine 184 serves as a coordination point for substrate.

It belongs to the type III pantothenate kinase family. In terms of assembly, homodimer. Requires NH4(+) as cofactor. K(+) serves as cofactor.

Its subcellular location is the cytoplasm. It carries out the reaction (R)-pantothenate + ATP = (R)-4'-phosphopantothenate + ADP + H(+). It functions in the pathway cofactor biosynthesis; coenzyme A biosynthesis; CoA from (R)-pantothenate: step 1/5. In terms of biological role, catalyzes the phosphorylation of pantothenate (Pan), the first step in CoA biosynthesis. This is Type III pantothenate kinase from Sulfurihydrogenibium sp. (strain YO3AOP1).